The following is a 300-amino-acid chain: Protoheme IX farnesyltransferase (300 aa).

A run of 8 helical transmembrane segments spans residues 24-44 (VTQL…PGMV), 46-66 (WHVL…AFAI), 94-114 (PQIL…LYTF), 118-138 (LTMW…TLLL), 146-166 (IVIG…AVTG), 172-192 (AWIL…VLAL), 224-244 (VILF…VVYL), and 278-298 (IVYL…RPLL).

Belongs to the UbiA prenyltransferase family. Protoheme IX farnesyltransferase subfamily.

It is found in the cell inner membrane. It catalyses the reaction heme b + (2E,6E)-farnesyl diphosphate + H2O = Fe(II)-heme o + diphosphate. Its pathway is porphyrin-containing compound metabolism; heme O biosynthesis; heme O from protoheme: step 1/1. Functionally, converts heme B (protoheme IX) to heme O by substitution of the vinyl group on carbon 2 of heme B porphyrin ring with a hydroxyethyl farnesyl side group. This Burkholderia ambifaria (strain MC40-6) protein is Protoheme IX farnesyltransferase.